The chain runs to 683 residues: Translation factor guf1, mitochondrial (683 aa).

Residues 1–43 (MRGCLQLARWLSAAPKGTAASLTRAPFVLANAPRYFTSSASRA) constitute a mitochondrion transit peptide. Residues 66–250 (ERYRNFCIVA…KIPAYGHFPV (185 aa)) enclose the tr-type G domain. GTP contacts are provided by residues 75–82 (AHVDHGKS), 139–143 (DTPGH), and 193–196 (NKVD).

It belongs to the TRAFAC class translation factor GTPase superfamily. Classic translation factor GTPase family. LepA subfamily.

Its subcellular location is the mitochondrion inner membrane. It catalyses the reaction GTP + H2O = GDP + phosphate + H(+). In terms of biological role, promotes mitochondrial protein synthesis. May act as a fidelity factor of the translation reaction, by catalyzing a one-codon backward translocation of tRNAs on improperly translocated ribosomes. Binds to mitochondrial ribosomes in a GTP-dependent manner. The chain is Translation factor guf1, mitochondrial (guf1) from Aspergillus fumigatus (strain ATCC MYA-4609 / CBS 101355 / FGSC A1100 / Af293) (Neosartorya fumigata).